The sequence spans 142 residues: Hemoglobin subunit alpha-A (142 aa).

The Globin domain occupies 2–142; sequence VLSANDKTNV…VGNVLTAKYR (141 aa). Histidine 59 contacts O2. Histidine 88 is a heme b binding site.

It belongs to the globin family. In terms of assembly, heterotetramer of two alpha chains and two beta chains. Red blood cells.

Functionally, involved in oxygen transport from the lung to the various peripheral tissues. The sequence is that of Hemoglobin subunit alpha-A (HBAA) from Aquila chrysaetos (Golden eagle).